The chain runs to 346 residues: Cell division protein ZipA (346 aa).

Residues 1–6 (MEDLQL) are Periplasmic-facing. The helical transmembrane segment at 7–27 (VLFVLGAIAIVAVLVHGFWSI) threads the bilayer. Residues 28–346 (RRQQPKSLKD…DYLHRIRANA (319 aa)) are Cytoplasmic-facing. 2 disordered regions span residues 76 to 103 (ANEAHTPEAPAFNPYLKQEAKTQPQPVE) and 121 to 145 (QPDFSLQSPTAKEQHRGPKASRQEP).

It belongs to the ZipA family. In terms of assembly, interacts with FtsZ via their C-terminal domains.

The protein localises to the cell inner membrane. In terms of biological role, essential cell division protein that stabilizes the FtsZ protofilaments by cross-linking them and that serves as a cytoplasmic membrane anchor for the Z ring. Also required for the recruitment to the septal ring of downstream cell division proteins. This chain is Cell division protein ZipA, found in Shewanella sp. (strain MR-7).